The chain runs to 752 residues: Probable beta-glucosidase D (752 aa).

Residues Met1–Ala18 form the signal peptide. Residues Asn187 and Asn237 are each glycosylated (N-linked (GlcNAc...) asparagine). Asp265 is a catalytic residue. N-linked (GlcNAc...) asparagine glycans are attached at residues Asn299, Asn343, Asn441, Asn510, Asn532, Asn571, Asn586, Asn638, Asn661, and Asn743.

The protein belongs to the glycosyl hydrolase 3 family.

The protein resides in the secreted. It catalyses the reaction Hydrolysis of terminal, non-reducing beta-D-glucosyl residues with release of beta-D-glucose.. Its pathway is glycan metabolism; cellulose degradation. Functionally, beta-glucosidases are one of a number of cellulolytic enzymes involved in the degradation of cellulosic biomass. Catalyzes the last step releasing glucose from the inhibitory cellobiose. The polypeptide is Probable beta-glucosidase D (bglD) (Aspergillus oryzae (strain ATCC 42149 / RIB 40) (Yellow koji mold)).